Here is a 395-residue protein sequence, read N- to C-terminus: Elongation factor Tu (395 aa).

Positions Lys10–Gln204 constitute a tr-type G domain. The G1 stretch occupies residues Gly19–Thr26. Gly19–Thr26 is a binding site for GTP. Residue Thr26 coordinates Mg(2+). Residues Gly60 to Asn64 are G2. The tract at residues Asp81–Gly84 is G3. GTP is bound by residues Asp81–His85 and Asn136–Asp139. The interval Asn136–Asp139 is G4. The G5 stretch occupies residues Ser174–Leu176.

This sequence belongs to the TRAFAC class translation factor GTPase superfamily. Classic translation factor GTPase family. EF-Tu/EF-1A subfamily. In terms of assembly, monomer.

The protein resides in the cytoplasm. The catalysed reaction is GTP + H2O = GDP + phosphate + H(+). GTP hydrolase that promotes the GTP-dependent binding of aminoacyl-tRNA to the A-site of ribosomes during protein biosynthesis. The polypeptide is Elongation factor Tu (Azobacteroides pseudotrichonymphae genomovar. CFP2).